We begin with the raw amino-acid sequence, 444 residues long: UDP-N-acetylmuramate--L-alanine ligase (444 aa).

Residue 110-116 participates in ATP binding; the sequence is GAHGKTS.

The protein belongs to the MurCDEF family.

Its subcellular location is the cytoplasm. The catalysed reaction is UDP-N-acetyl-alpha-D-muramate + L-alanine + ATP = UDP-N-acetyl-alpha-D-muramoyl-L-alanine + ADP + phosphate + H(+). The protein operates within cell wall biogenesis; peptidoglycan biosynthesis. In terms of biological role, cell wall formation. This chain is UDP-N-acetylmuramate--L-alanine ligase, found in Streptococcus pneumoniae (strain ATCC 700669 / Spain 23F-1).